Consider the following 347-residue polypeptide: Protein RecA (347 aa).

64–71 (GPESSGKT) is an ATP binding site.

It belongs to the RecA family.

Its subcellular location is the cytoplasm. Functionally, can catalyze the hydrolysis of ATP in the presence of single-stranded DNA, the ATP-dependent uptake of single-stranded DNA by duplex DNA, and the ATP-dependent hybridization of homologous single-stranded DNAs. It interacts with LexA causing its activation and leading to its autocatalytic cleavage. The sequence is that of Protein RecA from Bartonella quintana (strain Toulouse) (Rochalimaea quintana).